Reading from the N-terminus, the 353-residue chain is Photosystem II D2 protein (353 aa).

Thr-2 bears the N-acetylthreonine mark. At Thr-2 the chain carries Phosphothreonine. A helical transmembrane segment spans residues Cys-41 to Thr-61. His-118 serves as a coordination point for chlorophyll a. The chain crosses the membrane as a helical span at residues Gly-125–Pro-141. 2 residues coordinate pheophytin a: Gln-130 and Asn-143. The helical transmembrane segment at Val-153–Ser-166 threads the bilayer. Chlorophyll a is bound at residue His-198. A helical transmembrane segment spans residues Ala-208–Asp-228. A plastoquinone contacts are provided by His-215 and Phe-262. His-215 provides a ligand contact to Fe cation. His-269 lines the Fe cation pocket. The chain crosses the membrane as a helical span at residues Gly-279–Arg-295.

This sequence belongs to the reaction center PufL/M/PsbA/D family. As to quaternary structure, PSII is composed of 1 copy each of membrane proteins PsbA, PsbB, PsbC, PsbD, PsbE, PsbF, PsbH, PsbI, PsbJ, PsbK, PsbL, PsbM, PsbT, PsbX, PsbY, PsbZ, Psb30/Ycf12, at least 3 peripheral proteins of the oxygen-evolving complex and a large number of cofactors. It forms dimeric complexes. The D1/D2 heterodimer binds P680, chlorophylls that are the primary electron donor of PSII, and subsequent electron acceptors. It shares a non-heme iron and each subunit binds pheophytin, quinone, additional chlorophylls, carotenoids and lipids. There is also a Cl(-1) ion associated with D1 and D2, which is required for oxygen evolution. The PSII complex binds additional chlorophylls, carotenoids and specific lipids. is required as a cofactor.

It is found in the plastid. Its subcellular location is the chloroplast thylakoid membrane. The catalysed reaction is 2 a plastoquinone + 4 hnu + 2 H2O = 2 a plastoquinol + O2. Photosystem II (PSII) is a light-driven water:plastoquinone oxidoreductase that uses light energy to abstract electrons from H(2)O, generating O(2) and a proton gradient subsequently used for ATP formation. It consists of a core antenna complex that captures photons, and an electron transfer chain that converts photonic excitation into a charge separation. The D1/D2 (PsbA/PsbD) reaction center heterodimer binds P680, the primary electron donor of PSII as well as several subsequent electron acceptors. D2 is needed for assembly of a stable PSII complex. The protein is Photosystem II D2 protein of Ipomoea purpurea (Common morning glory).